The following is a 330-amino-acid chain: Tryptophan--tRNA ligase (330 aa).

ATP contacts are provided by residues 10–12 (QTT) and 18–19 (GN). Positions 11–19 (TTGALHLGN) match the 'HIGH' region motif. Asp-134 is a binding site for L-tryptophan. ATP contacts are provided by residues 146 to 148 (GED), Ile-186, and 195 to 199 (KMSKS). The short motif at 195 to 199 (KMSKS) is the 'KMSKS' region element.

It belongs to the class-I aminoacyl-tRNA synthetase family. In terms of assembly, homodimer.

It is found in the cytoplasm. It carries out the reaction tRNA(Trp) + L-tryptophan + ATP = L-tryptophyl-tRNA(Trp) + AMP + diphosphate + H(+). Catalyzes the attachment of tryptophan to tRNA(Trp). This is Tryptophan--tRNA ligase from Rickettsia prowazekii (strain Madrid E).